A 469-amino-acid chain; its full sequence is Gustatory receptor for sugar taste 64f (469 aa).

At 1–117 (MKILPKLERK…SFSWRNIRTC (117 aa)) the chain is on the cytoplasmic side. A helical membrane pass occupies residues 118–138 (FSLLFIASSLANFGLSLFKVL). Over 139-146 (NNPISFNS) the chain is Extracellular. Residues 147–167 (IKPIIFRGSVLLVLIVALNLA) form a helical membrane-spanning segment. The Cytoplasmic segment spans residues 168–199 (RQWPQLMMYWHTVEKDLPQYKTQLTKWKMGHT). Residues 200 to 220 (ISMVMLLGMMLSFAEHILSMV) traverse the membrane as a helical segment. Over 221–265 (SAINYASFCNRTADPIQNYFLRTNDEIFFVTSYSTTLALWGKFQN) the chain is Extracellular. The N-linked (GlcNAc...) asparagine glycan is linked to Asn230. The helical transmembrane segment at 266 to 286 (VFSTFIWNYMDLFVMIVSIGL) threads the bilayer. Residues 287 to 330 (ASKFRQLNDDLRNFKGMNMAPSYWSERRIQYRNICILCDKMDDA) are Cytoplasmic-facing. The helical transmembrane segment at 331–351 (ISLITMVSFSNNLYFICVQLL) threads the bilayer. Residues 352-353 (RS) are Extracellular-facing. The helical transmembrane segment at 354–374 (LNTMPSVAHAVYFYFSLIFLI) threads the bilayer. Residues 375–435 (GRTLAVSLYS…GMKFFHLTRK (61 aa)) lie on the Cytoplasmic side of the membrane. A helical membrane pass occupies residues 436–456 (LVLSVAGTIVTYELVLIQFHE). Over 457 to 469 (DNDLWDCDQSYYS) the chain is Extracellular.

It belongs to the insect chemoreceptor superfamily. Gustatory receptor (GR) family. Gr5a subfamily. Expressed in Gr5a-expressing sugar-sensing cells.

It is found in the cell membrane. In terms of biological role, one of the few identified sugar gustatory receptors identified so far and which promotes the starvation-induced increase of feeding motivation. Required in combination with Gr64a to detect sucrose, maltose, and glucose. This chain is Gustatory receptor for sugar taste 64f (Gr64f), found in Drosophila melanogaster (Fruit fly).